A 351-amino-acid chain; its full sequence is Fe-S cluster assembly protein DRE2 (351 aa).

The segment at 1–151 (MATTGRVLLL…KPDIGAQQAI (151 aa)) is N-terminal SAM-like domain. Positions 93-118 (RNRENKPWGLSDGNGNNANSSRRYND) are disordered. Residues 105–114 (GNGNNANSSR) are compositionally biased toward polar residues. The segment at 152–243 (PLKLGRRRKE…EDELLDEDDM (92 aa)) is linker. 4 residues coordinate [2Fe-2S] cluster: C253, C264, C267, and C269. Residues 253–269 (CRPKPGKRRRACKDCSC) are fe-S binding site A. 4 residues coordinate [4Fe-4S] cluster: C314, C317, C325, and C328. Short sequence motifs (cx2C motif) lie at residues 314 to 317 (CGNC) and 325 to 328 (CDGC). The interval 314–328 (CGNCSLGDAFRCDGC) is fe-S binding site B.

The protein belongs to the anamorsin family. As to quaternary structure, monomer. Interacts with TAH18. Interacts with MIA40. Requires [2Fe-2S] cluster as cofactor. It depends on [4Fe-4S] cluster as a cofactor.

It localises to the cytoplasm. It is found in the mitochondrion intermembrane space. Its function is as follows. Component of the cytosolic iron-sulfur (Fe-S) protein assembly (CIA) machinery required for the maturation of extramitochondrial Fe-S proteins. Part of an electron transfer chain functioning in an early step of cytosolic Fe-S biogenesis, facilitating the de novo assembly of a [4Fe-4S] cluster on the scaffold complex CFD1-NBP35. Electrons are transferred to DRE2 from NADPH via the FAD- and FMN-containing protein TAH18. TAH18-DRE2 are also required for the assembly of the diferric tyrosyl radical cofactor of ribonucleotide reductase (RNR), probably by providing electrons for reduction during radical cofactor maturation in the catalytic small subunit RNR2. This chain is Fe-S cluster assembly protein DRE2, found in Ajellomyces capsulatus (strain H143) (Darling's disease fungus).